Here is a 96-residue protein sequence, read N- to C-terminus: Conglutin delta 4 (96 aa).

The first 22 residues, 1–22, serve as a signal peptide directing secretion; that stretch reads MARLTILIAFVAALVLVVHTSA. Intrachain disulfides connect cysteine 29–cysteine 78 and cysteine 80–cysteine 91.

It belongs to the 2S seed storage albumins family.

It localises to the endoplasmic reticulum. The chain is Conglutin delta 4 from Lupinus angustifolius (Narrow-leaved blue lupine).